We begin with the raw amino-acid sequence, 237 residues long: Undecaprenyl-diphosphatase (237 aa).

Helical transmembrane passes span 38–58 (QTAVLHLGTLVSVVLFALDGI), 65–85 (WRIILNLIVSTIPAGVFGVLF), 92–112 (LFSSPRFLPLFFSATALILMF), 126–146 (MSFLDALLVGIAQLFALFPGI), 166–186 (ALQYSFLMSIPVVLGAGILGL), 191–211 (VTILAPIFAFLSGLFALYVLS), and 217–237 (GKIWQFSYYCLFVAILSYLAG).

Belongs to the UppP family.

Its subcellular location is the cell inner membrane. It carries out the reaction di-trans,octa-cis-undecaprenyl diphosphate + H2O = di-trans,octa-cis-undecaprenyl phosphate + phosphate + H(+). Functionally, catalyzes the dephosphorylation of undecaprenyl diphosphate (UPP). Confers resistance to bacitracin. This is Undecaprenyl-diphosphatase from Thermotoga maritima (strain ATCC 43589 / DSM 3109 / JCM 10099 / NBRC 100826 / MSB8).